A 407-amino-acid chain; its full sequence is 12S rRNA N(4)-cytidine methyltransferase METTL15 (407 aa).

S-adenosyl-L-methionine contacts are provided by residues 100 to 102 (GGH), Asp119, Phe146, Asp169, and Gln176. A Phosphoserine modification is found at Ser358.

Belongs to the methyltransferase superfamily. RsmH family.

The protein localises to the mitochondrion matrix. It catalyses the reaction cytidine(839) in 12S rRNA + S-adenosyl-L-methionine = N(4)-methylcytidine(839) in 12S rRNA + S-adenosyl-L-homocysteine + H(+). Its function is as follows. N4-methylcytidine (m4C) methyltransferase responsible for the methylation of position C839 in mitochondrial 12S rRNA. Involved in the stabilization of 12S rRNA folding, therefore facilitating the assembly of the mitochondrial small ribosomal subunits. The sequence is that of 12S rRNA N(4)-cytidine methyltransferase METTL15 (METTL15) from Pongo abelii (Sumatran orangutan).